The following is a 633-amino-acid chain: Beta-myrcene synthase TPS15CT (633 aa).

The transit peptide at 1-55 (MHCMAVHQFSPSIVSSLPTISTYNNNHFCRFFTPKTSISPISKTKSKSSTCYPIQ) directs the protein to the chloroplast. Residues arginine 344, aspartate 381, aspartate 385, arginine 525, and aspartate 528 each coordinate (2E)-geranyl diphosphate. Positions 381 and 385 each coordinate Mg(2+). The DDXXD motif motif lies at 381 to 385 (DDIYD). Mg(2+) is bound by residues aspartate 528, threonine 532, and glutamate 536.

Belongs to the terpene synthase family. Tpsb subfamily. It depends on Mg(2+) as a cofactor. Requires Mn(2+) as cofactor.

Its subcellular location is the plastid. It is found in the chloroplast. It catalyses the reaction (2E)-geranyl diphosphate = beta-myrcene + diphosphate. It functions in the pathway secondary metabolite biosynthesis; terpenoid biosynthesis. In terms of biological role, involved in monoterpene (C10) olefins biosynthesis, constituants of cannabinoids and terpenoids-rich resins. Catalyzes strictly the conversion of (2E)-geranyl diphosphate to beta-myrcene. The sequence is that of Beta-myrcene synthase TPS15CT from Cannabis sativa (Hemp).